Here is a 166-residue protein sequence, read N- to C-terminus: MLSKNLLEALNDQMNHEYFAAHAYMAMAAYCDKESYEGFANFFIQQAKEERFHGQKIYNYINDRGAHAEFRAVSAPKIDFSSILETFKDSLSQEQEVTRRFYNLSEIARQDKDYATISFLNWFLDEQVEEESMFETHINYLTRIGDDSNALYLYEKELGARTFDEE.

In terms of domain architecture, Ferritin-like diiron spans 2–145; sequence LSKNLLEALN…THINYLTRIG (144 aa). Residues glutamate 17, glutamate 50, histidine 53, glutamate 94, and glutamine 127 each contribute to the Fe cation site.

Belongs to the ferritin family. Prokaryotic subfamily.

Its subcellular location is the cytoplasm. It carries out the reaction 4 Fe(2+) + O2 + 6 H2O = 4 iron(III) oxide-hydroxide + 12 H(+). Functionally, iron-storage protein. The sequence is that of Bacterial non-heme ferritin (ftnA) from Staphylococcus aureus (strain USA300).